Consider the following 349-residue polypeptide: Protein O-mannose kinase (349 aa).

Residues 1–19 (MGQQHGTRNGLTHRELPRG) lie on the Cytoplasmic side of the membrane. A helical; Signal-anchor for type II membrane protein membrane pass occupies residues 20–42 (VGLLLAMALMNVALYLCLDQLFI). Residues 43 to 349 (SPGRSTADSR…TVMSQTKEML (307 aa)) are Lumenal-facing. 3 N-linked (GlcNAc...) asparagine glycosylation sites follow: N66, N164, and N219. Positions 80–349 (VRQLKRVGEG…TVMSQTKEML (270 aa)) constitute a Protein kinase domain.

Belongs to the protein kinase superfamily. Ser/Thr protein kinase family. STKL subfamily.

The protein resides in the endoplasmic reticulum membrane. It carries out the reaction 3-O-[beta-D-GalNAc-(1-&gt;3)-beta-D-GlcNAc-(1-&gt;4)-alpha-D-Man]-L-Thr-[protein] + ATP = 3-O-[beta-D-GalNAc-(1-&gt;3)-beta-D-GlcNAc-(1-&gt;4)-(O-6-P-alpha-D-Man)]-Thr-[protein] + ADP + H(+). Its function is as follows. Protein O-mannose kinase that specifically mediates phosphorylation at the 6-position of an O-mannose of the trisaccharide (N-acetylgalactosamine (GalNAc)-beta-1,3-N-acetylglucosamine (GlcNAc)-beta-1,4-mannose) to generate phosphorylated O-mannosyl trisaccharide (N-acetylgalactosamine-beta-1,3-N-acetylglucosamine-beta-1,4-(phosphate-6-)mannose). Phosphorylated O-mannosyl trisaccharide is a carbohydrate structure present in alpha-dystroglycan (DAG1), which is required for binding laminin G-like domain-containing extracellular proteins with high affinity. Only shows kinase activity when the GalNAc-beta-3-GlcNAc-beta-terminus is linked to the 4-position of O-mannose, suggesting that this disaccharide serves as the substrate recognition motif. The protein is Protein O-mannose kinase (Pomk) of Mus musculus (Mouse).